We begin with the raw amino-acid sequence, 68 residues long: Conotoxin Mr3.4 (68 aa).

Residues 1-19 form the signal peptide; sequence MSKLGVLLTICLLLFPLTA. The propeptide occupies 20 to 49; that stretch reads VPLDGDQPADRPAERMQDDISSERHPFFDR. 3 disulfides stabilise this stretch: Cys-53–Cys-67, Cys-54–Cys-63, and Cys-59–Cys-66. Pro-65 carries the post-translational modification 4-hydroxyproline.

It belongs to the conotoxin M superfamily. As to expression, expressed by the venom duct.

The protein resides in the secreted. In Conus marmoreus (Marble cone), this protein is Conotoxin Mr3.4.